The chain runs to 309 residues: Porphobilinogen deaminase (309 aa).

Cys-241 bears the S-(dipyrrolylmethanemethyl)cysteine mark.

The protein belongs to the HMBS family. Monomer. Dipyrromethane is required as a cofactor.

The catalysed reaction is 4 porphobilinogen + H2O = hydroxymethylbilane + 4 NH4(+). It functions in the pathway porphyrin-containing compound metabolism; protoporphyrin-IX biosynthesis; coproporphyrinogen-III from 5-aminolevulinate: step 2/4. Functionally, tetrapolymerization of the monopyrrole PBG into the hydroxymethylbilane pre-uroporphyrinogen in several discrete steps. This chain is Porphobilinogen deaminase, found in Bacillus cereus (strain AH820).